We begin with the raw amino-acid sequence, 301 residues long: tRNA dimethylallyltransferase 2 (301 aa).

11 to 18 (GATASGKT) is an ATP binding site. 13–18 (TASGKT) contributes to the substrate binding site. The tract at residues 36 to 39 (DSRQ) is interaction with substrate tRNA.

It belongs to the IPP transferase family. In terms of assembly, monomer. Mg(2+) serves as cofactor.

It carries out the reaction adenosine(37) in tRNA + dimethylallyl diphosphate = N(6)-dimethylallyladenosine(37) in tRNA + diphosphate. In terms of biological role, catalyzes the transfer of a dimethylallyl group onto the adenine at position 37 in tRNAs that read codons beginning with uridine, leading to the formation of N6-(dimethylallyl)adenosine (i(6)A). This Shewanella sediminis (strain HAW-EB3) protein is tRNA dimethylallyltransferase 2.